We begin with the raw amino-acid sequence, 320 residues long: MARKKIALIGSGMIGGTLAHLASLKELGDIVLFDIADGIPQGKGLDIAQSGPVEGFNAKLSGASDYAAIEGADVCIVTAGVARKPGMSRDDLLGINLKVMEQVGAGIKKYAPNAFVICITNPLDAMVWALQKFSGLPKNKVVGMAGVLDSARFRLFLAEEFNVSVQDVTAFVLGGHGDTMVPLARYSTVGGVPLTDLVKMGWLTAERLEQIIQRTRDGGAEIVGLLKTGSAYYAPAASAIEMAESYLKDKKRVLPAAAHLSGQYGVDDMYVGVPTIIGAGGIERVIEIELNKEEEAAFQKSVGAVAGLCEACINIAPSLK.

Residues 10–15 (GSGMIG) and Asp-34 each bind NAD(+). Substrate contacts are provided by Arg-83 and Arg-89. NAD(+)-binding positions include Asn-96 and 119–121 (ITN). Substrate contacts are provided by Asn-121 and Arg-152. The active-site Proton acceptor is His-176.

It belongs to the LDH/MDH superfamily. MDH type 3 family.

It carries out the reaction (S)-malate + NAD(+) = oxaloacetate + NADH + H(+). Catalyzes the reversible oxidation of malate to oxaloacetate. The chain is Malate dehydrogenase from Agrobacterium fabrum (strain C58 / ATCC 33970) (Agrobacterium tumefaciens (strain C58)).